Consider the following 108-residue polypeptide: Glutaredoxin 4 (108 aa).

Residues 5–107 (IKKIQNQIQN…KTISICDKLN (103 aa)) enclose the Glutaredoxin domain. Residue K22 coordinates glutathione. C30 is a binding site for [2Fe-2S] cluster. Residues R59, F71, and 84–85 (CN) contribute to the glutathione site.

Belongs to the glutaredoxin family. Monothiol subfamily. As to quaternary structure, homodimer.

The protein localises to the cytoplasm. Monothiol glutaredoxin involved in the biogenesis of iron-sulfur clusters. This is Glutaredoxin 4 (grxD) from Buchnera aphidicola subsp. Baizongia pistaciae (strain Bp).